Consider the following 434-residue polypeptide: Fez family zinc finger protein 2 (434 aa).

An Engrailed homology 1 repressor motif is present at residues 27 to 42 (SLAFSIERIMAKTSEP). 6 C2H2-type zinc fingers span residues 253–275 (FTCEVCGKVFNAHYNLTRHMPVH), 281–303 (FVCKVCGKGFRQASTLCRHKIIH), 309–331 (HKCNQCGKAFNRSSTLNTHIRIH), 337–359 (FVCEFCGKGFHQKGNYKNHKLTH), 365–387 (YKCSICNKAFHQVYNLTFHMHTH), and 393–416 (FTCATCGKGFCRNFDLKKHVRKLH).

It belongs to the krueppel C2H2-type zinc-finger protein family.

The protein localises to the nucleus. In terms of biological role, transcription repressor. Component of the regulatory cascade that controls the development of dopaminergic (DA) and serotonergic (5HT) neurons. This chain is Fez family zinc finger protein 2 (fezf2), found in Xenopus laevis (African clawed frog).